A 157-amino-acid chain; its full sequence is UPF0756 membrane protein ABC2716 (157 aa).

The next 4 helical transmembrane spans lie at 8 to 28 (FLLL…IIAI), 54 to 74 (LGVT…DIGF), 84 to 104 (LYAW…ASGI), and 117 to 137 (LVLG…GPLI).

Belongs to the UPF0756 family.

It localises to the cell membrane. This is UPF0756 membrane protein ABC2716 from Shouchella clausii (strain KSM-K16) (Alkalihalobacillus clausii).